Reading from the N-terminus, the 508-residue chain is Protein MGF 505-9R (508 aa).

ANK repeat units lie at residues 54 to 83, 253 to 282, and 313 to 343; these read SINL…NLHY, QVDT…RKTV, and IIKK…KINL.

This sequence belongs to the asfivirus MGF 505 family.

In terms of biological role, plays a role in virus cell tropism, and may be required for efficient virus replication in macrophages. This chain is Protein MGF 505-9R, found in Ornithodoros (relapsing fever ticks).